The chain runs to 379 residues: Pentatricopeptide repeat-containing protein At3g25210, mitochondrial (379 aa).

PPR repeat units lie at residues 142–177 (SVPLYNCIIRFCCGRKFLFNRAFDVYNKMLRSDDSK), 179–221 (DLET…GVIP), 222–256 (DTFVLNMIIKAYAKCLEVDEAIRVFKEMALYGSEP), 257–291 (NAYTYSYLVKGVCEKGRVGQGLGFYKEMQVKGMVP), 292–326 (NGSCYMVLICSLSMERRLDEAVEVVYDMLANSLSP), and 327–361 (DMLTYNTVLTELCRGGRGSEALEMVEEWKKRDPVM).

The protein belongs to the PPR family. P subfamily.

Its subcellular location is the mitochondrion. This Arabidopsis thaliana (Mouse-ear cress) protein is Pentatricopeptide repeat-containing protein At3g25210, mitochondrial.